Here is a 240-residue protein sequence, read N- to C-terminus: Sugar fermentation stimulation protein homolog (240 aa).

Belongs to the SfsA family.

The sequence is that of Sugar fermentation stimulation protein homolog from Pasteurella multocida (strain Pm70).